Here is a 242-residue protein sequence, read N- to C-terminus: Small ribosomal subunit protein uS2 (242 aa).

Belongs to the universal ribosomal protein uS2 family.

In Shewanella frigidimarina (strain NCIMB 400), this protein is Small ribosomal subunit protein uS2.